Here is a 186-residue protein sequence, read N- to C-terminus: UPF0301 protein Neut_0448 (186 aa).

It belongs to the UPF0301 (AlgH) family.

This is UPF0301 protein Neut_0448 from Nitrosomonas eutropha (strain DSM 101675 / C91 / Nm57).